Reading from the N-terminus, the 77-residue chain is Acyl carrier protein (77 aa).

In terms of domain architecture, Carrier spans 1-76 (MSVEQRVKEI…DVLDYIKSKQ (76 aa)). The residue at position 36 (serine 36) is an O-(pantetheine 4'-phosphoryl)serine.

This sequence belongs to the acyl carrier protein (ACP) family. In terms of processing, 4'-phosphopantetheine is transferred from CoA to a specific serine of apo-ACP by AcpS. This modification is essential for activity because fatty acids are bound in thioester linkage to the sulfhydryl of the prosthetic group.

The protein resides in the cytoplasm. The protein operates within lipid metabolism; fatty acid biosynthesis. Carrier of the growing fatty acid chain in fatty acid biosynthesis. The sequence is that of Acyl carrier protein from Sulfurihydrogenibium sp. (strain YO3AOP1).